The chain runs to 390 residues: S-adenosylmethionine synthase 2 (390 aa).

Residue glutamate 9 participates in Mg(2+) binding. ATP is bound at residue histidine 15. Glutamate 43 is a binding site for K(+). L-methionine contacts are provided by glutamate 56 and glutamine 99. ATP-binding positions include aspartate 167 to lysine 169, serine 235 to phenylalanine 238, aspartate 246, arginine 252 to lysine 253, alanine 269, lysine 273, and lysine 277. Residue aspartate 246 coordinates L-methionine. Lysine 277 is a binding site for L-methionine.

This sequence belongs to the AdoMet synthase family. As to quaternary structure, homotetramer. It depends on Mn(2+) as a cofactor. Mg(2+) serves as cofactor. The cofactor is Co(2+). Requires K(+) as cofactor.

It localises to the cytoplasm. The catalysed reaction is L-methionine + ATP + H2O = S-adenosyl-L-methionine + phosphate + diphosphate. The protein operates within amino-acid biosynthesis; S-adenosyl-L-methionine biosynthesis; S-adenosyl-L-methionine from L-methionine: step 1/1. Functionally, catalyzes the formation of S-adenosylmethionine from methionine and ATP. The reaction comprises two steps that are both catalyzed by the same enzyme: formation of S-adenosylmethionine (AdoMet) and triphosphate, and subsequent hydrolysis of the triphosphate. The sequence is that of S-adenosylmethionine synthase 2 (SAM2) from Actinidia chinensis var. chinensis (Chinese soft-hair kiwi).